Reading from the N-terminus, the 581-residue chain is MNHTPSPHMTEAAKSGAGLLCGLGLGPDRVRSPDSLTHTPSPSGGTPSSSPPLLLSPGLGCDGIGDWESREELRLRELEEARARAAQMEKTMRWWSDCTANWREKWSKVRAERNRARDEVRQLRQRLDALTKELTGARRERQELAAENEQLRLEAQRVRAEQSSPENASTAPESISSTASTHSNQPREAEIKQDNQDEEGVRDGPGSPEQEPVRDIGTDKLYKQKEMELLEALLRAKSEAPDSWDGRSASSLRSALSRQDRNRLLWEDLAALEEDTSKLNALQLRLDESQKVLLKEREDKHALIKNIEKLEAELSQWKLKYEELNKSKQEALKQLNLLKEVHQDELGRMSEDLEDELGARTNMDKKLAELRTEMERLQVENAAEWGRRERLETEKLALERENKKLRTQMEDLEEQLARKRRQAASALDTDLKTIQSELFERNKELADLRHVHSKVKKQYQEKMAELTHANRRVEQHEAEVKKLRLRVEELKKELGQAEDELDEAHNQTRKLQRSLDEQVEQSENLQVQLEHLQSRLRRQQNPGLFGKMRTSASSRFGPEDADGPPSDPDEDEEEELQLQIP.

4 disordered regions span residues Met-1–Cys-61, Gln-156–Asp-219, Gln-496–Glu-517, and Ser-534–Pro-581. Positions Thr-39–Leu-59 are enriched in low complexity. Positions Arg-70 to Ser-164 form a coiled coil. Residues Glu-161–Asn-184 show a composition bias toward polar residues. Residues Gln-185–Arg-202 show a composition bias toward basic and acidic residues. A coiled-coil region spans residues Ala-270–Asn-541. Residues Glu-559–Pro-581 show a composition bias toward acidic residues.

This Danio rerio (Zebrafish) protein is Coiled-coil domain-containing protein 102A (ccdc102a).